Reading from the N-terminus, the 679-residue chain is Sodium-dependent phosphate transporter 1 (679 aa).

The next 6 helical transmembrane spans lie at 21–41 (YLWM…SVGA), 62–82 (ACIL…AKVS), 100–120 (GLLM…QLVA), 158–178 (IVMS…ILFF), 203–223 (ACTV…LLGF), and 230–250 (GTIL…WFFV). Phosphoserine occurs at positions 265 and 269. Residues 268–288 (ESPLMEKKNSLKEDHEETKLS) are disordered. Positions 271 to 286 (LMEKKNSLKEDHEETK) are enriched in basic and acidic residues. 4 helical membrane-spanning segments follow: residues 511 to 531 (VSLL…FAHG), 558 to 578 (VATP…GLWV), 600 to 620 (FSIE…GLPI), and 650 to 670 (IFMA…AIMA). The tract at residues 550 to 558 (DTGDVSSKV) is a.

This sequence belongs to the inorganic phosphate transporter (PiT) (TC 2.A.20) family.

The protein localises to the cell membrane. It catalyses the reaction 2 Na(+)(out) + phosphate(out) = 2 Na(+)(in) + phosphate(in). Its function is as follows. Sodium-phosphate symporter which preferentially transports the monovalent form of phosphate with a stoichiometry of two sodium ions per phosphate ion. May play a role in extracellular matrix and cartilage calcification as well as in vascular calcification. Essential for cell proliferation but this function is independent of its phosphate transporter activity. This is Sodium-dependent phosphate transporter 1 (SLC20A1) from Pongo abelii (Sumatran orangutan).